Consider the following 221-residue polypeptide: ATP-dependent dethiobiotin synthetase BioD (221 aa).

11–16 is an ATP binding site; it reads DVGKTF. Thr-15 is a Mg(2+) binding site. Residue Lys-35 is part of the active site. Residue Thr-39 coordinates substrate. Residues Asp-44 and 103–106 contribute to the ATP site; that span reads EGAG. Positions 44 and 103 each coordinate Mg(2+).

It belongs to the dethiobiotin synthetase family. As to quaternary structure, homodimer. Mg(2+) is required as a cofactor.

It is found in the cytoplasm. It catalyses the reaction (7R,8S)-7,8-diammoniononanoate + CO2 + ATP = (4R,5S)-dethiobiotin + ADP + phosphate + 3 H(+). It functions in the pathway cofactor biosynthesis; biotin biosynthesis; biotin from 7,8-diaminononanoate: step 1/2. Its function is as follows. Catalyzes a mechanistically unusual reaction, the ATP-dependent insertion of CO2 between the N7 and N8 nitrogen atoms of 7,8-diaminopelargonic acid (DAPA, also called 7,8-diammoniononanoate) to form a ureido ring. This Leptospira interrogans serogroup Icterohaemorrhagiae serovar copenhageni (strain Fiocruz L1-130) protein is ATP-dependent dethiobiotin synthetase BioD.